The following is a 479-amino-acid chain: Sodium-coupled neutral amino acid transporter 5 (479 aa).

Residues 1-61 are Cytoplasmic-facing; sequence MAISCAVGME…LDFEGKTSFG (61 aa). The chain crosses the membrane as a helical span at residues 62–84; that stretch reads MSVFNLSNAIMGSGILGLAYAMA. Residues 85-97 lie on the Extracellular side of the membrane; it reads HTGVIFFLALLLC. The helical transmembrane segment at 98-118 threads the bilayer; sequence IALLSSYSIHLLLTCASVVGI. The Cytoplasmic portion of the chain corresponds to 119–135; sequence RAYEQLGQRAFGPAGKV. Residues 136 to 156 form a helical membrane-spanning segment; the sequence is VVAIIICLHNVGAMSSYLFII. The Extracellular portion of the chain corresponds to 157–176; it reads KSELPLVIGTFLHMDPEGDW. Residues 177–197 form a helical membrane-spanning segment; sequence FLKGNLLIILVSLLIILPLAL. The Cytoplasmic segment spans residues 198-202; it reads MKHLG. A helical transmembrane segment spans residues 203–223; the sequence is YLGYTSSLSLTCMLFFLISVI. The Extracellular segment spans residues 224-264; the sequence is YKKFQIGCDVSHNDTVVEAEQAPLQAFNSSCEAELFTVDSQ. Residues Cys-231 and Cys-254 are joined by a disulfide bond. Residue Asn-236 is glycosylated (N-linked (GlcNAc...) asparagine). A helical transmembrane segment spans residues 265 to 285; the sequence is MSYTVPIMAFAFVCHPEVLPI. Over 286 to 302 the chain is Cytoplasmic; that stretch reads YTELCRPTQRRMQAVAN. A helical transmembrane segment spans residues 303–323; the sequence is MSIGAMFIMYGLTATFGYLTF. The Extracellular segment spans residues 324 to 341; that stretch reads YSTVKAEMLEMYTQEDML. The helical transmembrane segment at 342–362 threads the bilayer; the sequence is ILCVRLAVLLAVTLTVPVVLF. Residues 363 to 383 lie on the Cytoplasmic side of the membrane; that stretch reads PIRRALQQLLFPSKAFSWLRH. A helical transmembrane segment spans residues 384 to 404; the sequence is VAIALILLILVNILVICVPTI. Over 405–406 the chain is Extracellular; the sequence is RD. Residues 407–427 form a helical membrane-spanning segment; the sequence is IFGFIGSTSAPSLIFILPSVF. The Cytoplasmic segment spans residues 428-446; it reads YLRIVPTEVEPLFSWPKIQ. The chain crosses the membrane as a helical span at residues 447–467; it reads ALCFGVLGVLFMAISLGFMFA. The Extracellular segment spans residues 468 to 479; sequence NWATGQSRMSGH.

Belongs to the amino acid/polyamine transporter 2 family. As to expression, expressed in the ganglion cell layer and the nerve fiber layer (at protein level). Also expreseed in the cells of the inner nuclear layer and in the inner plexiform layer (at protein level). Expressed in Mueller and ganglion retinal cell.

The protein resides in the cell membrane. The catalysed reaction is L-glutamine(out) + Na(+)(out) + H(+)(in) = L-glutamine(in) + Na(+)(in) + H(+)(out). The enzyme catalyses L-serine(out) + Na(+)(out) + H(+)(in) = L-serine(in) + Na(+)(in) + H(+)(out). It catalyses the reaction L-alanine(out) + Na(+)(out) + H(+)(in) = L-alanine(in) + Na(+)(in) + H(+)(out). It carries out the reaction glycine(out) + Na(+)(out) + H(+)(in) = glycine(in) + Na(+)(in) + H(+)(out). The catalysed reaction is L-asparagine(out) + Na(+)(out) + H(+)(in) = L-asparagine(in) + Na(+)(in) + H(+)(out). The enzyme catalyses L-histidine(out) + Na(+)(out) + H(+)(in) = L-histidine(in) + Na(+)(in) + H(+)(out). It catalyses the reaction L-cysteine(out) + Na(+)(out) + H(+)(in) = L-cysteine(in) + Na(+)(in) + H(+)(out). Not inhibited by lithium. Partial allosteric regulation on ions sodium binding. In terms of biological role, symporter that cotransports neutral amino acids and sodium ions, coupled to an H(+) antiporter activity. Releases L-glutamine and glycine from astroglial cells and may participate in the glutamate/GABA-L-glutamine cycle and the NMDA receptors activation. In addition, contributes significantly to L-glutamine uptake in retina, namely in ganglion and Mueller cells therefore, participates in the retinal glutamate-glutamine cycle. The transport activity is pH sensitive, Li(+) tolerant, bidirectional and associated with large uncoupled fluxes of protons. Moreover functions in both direction and is associated with large uncoupled fluxes of protons. The transport is electroneutral coupled to the cotransport of 1 Na(+) and the antiport of 1 H(+). May have a particular importance for modulation of net hepatic glutamine flux. The polypeptide is Sodium-coupled neutral amino acid transporter 5 (Mus musculus (Mouse)).